The following is a 712-amino-acid chain: Polyribonucleotide nucleotidyltransferase (712 aa).

Asp-485 and Asp-491 together coordinate Mg(2+). Positions 552–611 constitute a KH domain; the sequence is PKITTISVPKEKIRDVIGQGGKVIREIVEYSGAKIDINDDGTIMIAASSEDQATRAIERI. The S1 motif domain maps to 621–689; it reads GAIYTGKVVK…DRGKVKLSMR (69 aa).

This sequence belongs to the polyribonucleotide nucleotidyltransferase family. Mg(2+) serves as cofactor.

Its subcellular location is the cytoplasm. It carries out the reaction RNA(n+1) + phosphate = RNA(n) + a ribonucleoside 5'-diphosphate. Involved in mRNA degradation. Catalyzes the phosphorolysis of single-stranded polyribonucleotides processively in the 3'- to 5'-direction. The chain is Polyribonucleotide nucleotidyltransferase from Gluconacetobacter diazotrophicus (strain ATCC 49037 / DSM 5601 / CCUG 37298 / CIP 103539 / LMG 7603 / PAl5).